A 176-amino-acid polypeptide reads, in one-letter code: Large ribosomal subunit protein uL6 (176 aa).

This sequence belongs to the universal ribosomal protein uL6 family. As to quaternary structure, part of the 50S ribosomal subunit.

Functionally, this protein binds to the 23S rRNA, and is important in its secondary structure. It is located near the subunit interface in the base of the L7/L12 stalk, and near the tRNA binding site of the peptidyltransferase center. In Burkholderia thailandensis (strain ATCC 700388 / DSM 13276 / CCUG 48851 / CIP 106301 / E264), this protein is Large ribosomal subunit protein uL6.